The sequence spans 941 residues: Cilia- and flagella-associated protein 69 (941 aa).

It localises to the cell projection. Its subcellular location is the cilium. It is found in the flagellum. Functionally, cilium- and flagellum-associated protein. In the olfactory epithelium, regulates the speed of activation and termination of the odor response and thus contributes to the robustness of olfactory transduction pathways. Required for sperm flagellum assembly and stability. The sequence is that of Cilia- and flagella-associated protein 69 from Callithrix jacchus (White-tufted-ear marmoset).